We begin with the raw amino-acid sequence, 345 residues long: Probable dual-specificity RNA methyltransferase RlmN (345 aa).

Residue Glu90 is the Proton acceptor of the active site. The 232-residue stretch at 96–327 (QSYGNSVCVT…CIVRREFGHD (232 aa)) folds into the Radical SAM core domain. Cys103 and Cys332 are oxidised to a cystine. [4Fe-4S] cluster is bound by residues Cys110, Cys114, and Cys117. S-adenosyl-L-methionine is bound by residues 160-161 (GE), Ser192, 215-217 (SLH), and Asn291. Catalysis depends on Cys332, which acts as the S-methylcysteine intermediate.

The protein belongs to the radical SAM superfamily. RlmN family. It depends on [4Fe-4S] cluster as a cofactor.

Its subcellular location is the cytoplasm. The enzyme catalyses adenosine(2503) in 23S rRNA + 2 reduced [2Fe-2S]-[ferredoxin] + 2 S-adenosyl-L-methionine = 2-methyladenosine(2503) in 23S rRNA + 5'-deoxyadenosine + L-methionine + 2 oxidized [2Fe-2S]-[ferredoxin] + S-adenosyl-L-homocysteine. The catalysed reaction is adenosine(37) in tRNA + 2 reduced [2Fe-2S]-[ferredoxin] + 2 S-adenosyl-L-methionine = 2-methyladenosine(37) in tRNA + 5'-deoxyadenosine + L-methionine + 2 oxidized [2Fe-2S]-[ferredoxin] + S-adenosyl-L-homocysteine. Functionally, specifically methylates position 2 of adenine 2503 in 23S rRNA and position 2 of adenine 37 in tRNAs. This Spiroplasma citri protein is Probable dual-specificity RNA methyltransferase RlmN.